Here is a 1081-residue protein sequence, read N- to C-terminus: Isoleucine--tRNA ligase (1081 aa).

Positions 53–63 (PFATGLPHYGN) match the 'HIGH' region motif. A 'KMSKS' region motif is present at residues 607 to 611 (KMSKS). Position 610 (Lys-610) interacts with ATP.

This sequence belongs to the class-I aminoacyl-tRNA synthetase family.

The catalysed reaction is tRNA(Ile) + L-isoleucine + ATP = L-isoleucyl-tRNA(Ile) + AMP + diphosphate. This Tetrahymena thermophila protein is Isoleucine--tRNA ligase (ILSA).